The following is a 435-amino-acid chain: Prenyltransferase nanD (435 aa).

E101 contacts substrate. Dimethylallyl diphosphate is bound by residues R114, K202, and Y204. Y206 is a substrate binding site. K280, Y282, Y364, Y429, and Y433 together coordinate dimethylallyl diphosphate.

Belongs to the tryptophan dimethylallyltransferase family.

The protein operates within secondary metabolite biosynthesis. Prenyltransferase; part of the gene cluster that mediates the biosynthesis of the benzazepine alkaloid nanangelenin A which contains an unprecedented 3,4-dihydro-1-benzazepine-2,5-dione-N-prenyl-N-acetoxy-anthranilamide scaffold. The first step of nanangelenin biosynthesis is catalyzed by the indoleamine 2,3-dioxygenase nanC which produces N-formyl-kynurenine through the catabolism of tryptophan. The two-module NRPS nanA then utilizes anthranilate (Ant) and L-kynurenine (L-Kyn) to assemble the dipeptide product nanangelenin B. The first adenylation domain of nanA (A1) loads anthranilate onto the T1 domain, while A2 loads kynurenine, generated through spontaneous nonenzymatic deformylation of the nanC-supplied N-formyl-kynurenine. The peptide bond formation between the tethered amino acids is catalyzed by the first condensation domain (C1) between anthranilate's carbonyl carbon and kynurenine's aliphatic primary amine. The second C domain (C2) catalyzes the final cyclization event between the aromatic amine of kynurenine and the tethered carbonyl carbon, yielding nanangelenin B. The terminal T3 domain enhances the catalytic efficiency of C2, suggesting the T2-tethered Ant-L-Kyn is transferred to T3 prior to cyclization by C2. Once released from nanA, nanangelenin B is then prenylated by the prenyltransferase nanD to form nanangelenin C. Nanangelenin C is then N-hydroxylated by the FAD-dependent monooxygenase nanF and further acetylated by the acetyltransferase nanB to yield nanangelenin F. Finally, the N-methyltransferase nanE methylates the amide nitrogen of 1-benzazepine to convert nanangelenin F into nanangelenin A. NanE is also able to methylate most of the intermediates of the pathway such as nanangelenin B and nanangelenin C to produce nanangelenin D and nanangelenin E, respectively. The chain is Prenyltransferase nanD from Aspergillus nanangensis.